The sequence spans 297 residues: 33 kDa chaperonin (297 aa).

2 cysteine pairs are disulfide-bonded: Cys-239/Cys-241 and Cys-272/Cys-275.

It belongs to the HSP33 family. In terms of processing, under oxidizing conditions two disulfide bonds are formed involving the reactive cysteines. Under reducing conditions zinc is bound to the reactive cysteines and the protein is inactive.

The protein localises to the cytoplasm. Functionally, redox regulated molecular chaperone. Protects both thermally unfolding and oxidatively damaged proteins from irreversible aggregation. Plays an important role in the bacterial defense system toward oxidative stress. This is 33 kDa chaperonin from Synechococcus elongatus (strain ATCC 33912 / PCC 7942 / FACHB-805) (Anacystis nidulans R2).